A 282-amino-acid chain; its full sequence is Pantothenate synthetase (282 aa).

Position 30-37 (30-37 (MGALHAGH)) interacts with ATP. H37 (proton donor) is an active-site residue. Q61 provides a ligand contact to (R)-pantoate. A beta-alanine-binding site is contributed by Q61. An ATP-binding site is contributed by 147–150 (GEKD). Position 153 (Q153) interacts with (R)-pantoate. ATP-binding positions include V176 and 184-187 (LSSR).

Belongs to the pantothenate synthetase family. In terms of assembly, homodimer.

The protein localises to the cytoplasm. It catalyses the reaction (R)-pantoate + beta-alanine + ATP = (R)-pantothenate + AMP + diphosphate + H(+). The protein operates within cofactor biosynthesis; (R)-pantothenate biosynthesis; (R)-pantothenate from (R)-pantoate and beta-alanine: step 1/1. In terms of biological role, catalyzes the condensation of pantoate with beta-alanine in an ATP-dependent reaction via a pantoyl-adenylate intermediate. In Bacteroides fragilis (strain ATCC 25285 / DSM 2151 / CCUG 4856 / JCM 11019 / LMG 10263 / NCTC 9343 / Onslow / VPI 2553 / EN-2), this protein is Pantothenate synthetase.